Consider the following 965-residue polypeptide: Phosphoenolpyruvate carboxylase (965 aa).

A Phosphoserine modification is found at Ser11. Active-site residues include His173 and Lys601.

This sequence belongs to the PEPCase type 1 family. As to quaternary structure, homotetramer. Mg(2+) serves as cofactor.

Its subcellular location is the cytoplasm. The enzyme catalyses oxaloacetate + phosphate = phosphoenolpyruvate + hydrogencarbonate. Its pathway is photosynthesis; C3 acid pathway. By light-reversible phosphorylation. Its function is as follows. Through the carboxylation of phosphoenolpyruvate (PEP) it forms oxaloacetate, a four-carbon dicarboxylic acid source for the tricarboxylic acid cycle. The polypeptide is Phosphoenolpyruvate carboxylase (PPC1) (Solanum tuberosum (Potato)).